We begin with the raw amino-acid sequence, 523 residues long: MQIREVILDGESLTIEQVLAVAYGQPGTPVVRLAPIARQRVERAAQAVQDLLARGVVAYGITTGFGAFKDRVIAPDQVERLQYNILVSHAVGVGPVFDIPTTRAIMLIRANTLARGHSGVRLQTVERLLDMLNQGIHPRIPCKGSLGASGDLAPLAHMALPLIGLGEVEWQGEVLPAATALERLGWQPLHLAAKEGLALTNGTAVMCALGVIETARAETLSATADIAGCLSLEALYGTPAAFDARLHALRPFPRQIECAAHLRRLLAGSTFVRNNDPRHVQDAYTLRCIPQVHGAVRDAIAYARWVFAIELNAVTDNPLLFVDDDGNVEVISGGNFHGEPLAIALDYLGLAVAELGNIAERRLMRLTDEASNTHVLPAFLTRAGGLNSGFMIVQYTAAALATENKVLAHPASVDSIPTSANVEDHVSMGVTAGLKLRSIIDNVSQILALELFAAAQGIDFRRQELGSQARLGRGTGPVYELIRQYVPFIAEDTLLHPYITIISELVAQGKIAAAAAVHDDADA.

Positions 148-150 (ASG) form a cross-link, 5-imidazolinone (Ala-Gly). Ser149 carries the post-translational modification 2,3-didehydroalanine (Ser).

Belongs to the PAL/histidase family. In terms of processing, contains an active site 4-methylidene-imidazol-5-one (MIO), which is formed autocatalytically by cyclization and dehydration of residues Ala-Ser-Gly.

The protein localises to the cytoplasm. It catalyses the reaction L-histidine = trans-urocanate + NH4(+). The protein operates within amino-acid degradation; L-histidine degradation into L-glutamate; N-formimidoyl-L-glutamate from L-histidine: step 1/3. This is Histidine ammonia-lyase from Chloroflexus aurantiacus (strain ATCC 29366 / DSM 635 / J-10-fl).